The primary structure comprises 312 residues: Protein-methionine-sulfoxide reductase catalytic subunit MsrP (312 aa).

The segment at residues 1–47 (MLIRRPPDLLPSEITPEPLARGRRALLKGLGAGAALAGLGLPQISQA) is a signal peptide (tat-type signal). Mo-molybdopterin-binding positions include Asn-74, 77-78 (YE), Cys-133, Thr-168, Asn-216, Arg-221, and 232-234 (SAK).

The protein belongs to the MsrP family. In terms of assembly, heterodimer of a catalytic subunit (MsrP) and a heme-binding subunit (MsrQ). Mo-molybdopterin serves as cofactor. Post-translationally, predicted to be exported by the Tat system. The position of the signal peptide cleavage has not been experimentally proven.

The protein localises to the periplasm. The catalysed reaction is L-methionyl-[protein] + a quinone + H2O = L-methionyl-(R)-S-oxide-[protein] + a quinol. In terms of biological role, part of the MsrPQ system that repairs oxidized periplasmic proteins containing methionine sulfoxide residues (Met-O), using respiratory chain electrons. Thus protects these proteins from oxidative-stress damage caused by reactive species of oxygen and chlorine generated by the host defense mechanisms. MsrPQ is essential for the maintenance of envelope integrity under bleach stress, rescuing a wide series of structurally unrelated periplasmic proteins from methionine oxidation. The catalytic subunit MsrP is non-stereospecific, being able to reduce both (R-) and (S-) diastereoisomers of methionine sulfoxide. Involved in protection against reactive chlorine species (RCS) generated by chlorite and hypochlorite. The chain is Protein-methionine-sulfoxide reductase catalytic subunit MsrP from Azospira oryzae (strain ATCC BAA-33 / DSM 13638 / PS) (Dechlorosoma suillum).